We begin with the raw amino-acid sequence, 488 residues long: Coiled-coil domain-containing protein 77 (488 aa).

Residues 21–48 are disordered; sequence GVAVSGPTKRRGMADSLESTPLPSPEDR. S36 is modified (phosphoserine). A Glycyl lysine isopeptide (Lys-Gly) (interchain with G-Cter in SUMO2) cross-link involves residue K51. Coiled-coil stretches lie at residues 55-118 and 208-488; these read SKEL…QVCL and KESS…LRLC. Positions 192–213 are disordered; that stretch reads FKADPKISKRRPSRERKESSEH.

In Homo sapiens (Human), this protein is Coiled-coil domain-containing protein 77 (CCDC77).